Reading from the N-terminus, the 309-residue chain is MPLTHIRLLLNGKKATNVDIRQSVIALREQGHTIDVRVSWESADMLRFITEAIADNVGRVVIGGGDGSLNEAVNALMQQPQQDHKLEIAVLPLGTANDFATACGISNIIQSTLELAIHGDSYPIDIIRANNNYFINAAVAGFGAQVTAETPTELKDFLGGGAYTLVGLAKALGFKPYQGSITTDKGTFNGDIVVGAICNNKQAGGGQMLAPNALIDDGLMDITLLKSFSTFDIPVVLDEIQAMSHEAKFCYHFQTRWLEIDFPIKLPLNLDGEPYPTKKMRFEVLPKAIQFVLPPNCPCLVQSTQKSGI.

The DAGKc domain maps to 1-133; sequence MPLTHIRLLL…IDIIRANNNY (133 aa). Residues serine 39, 65–71, and threonine 95 contribute to the ATP site; that span reads GDGSLNE. Mg(2+) is bound by residues leucine 214, aspartate 217, and leucine 219. The active-site Proton acceptor is the glutamate 273.

It belongs to the diacylglycerol/lipid kinase family. YegS lipid kinase subfamily. The cofactor is Mg(2+). Ca(2+) is required as a cofactor.

It is found in the cytoplasm. Its function is as follows. Probably phosphorylates lipids; the in vivo substrate is unknown. The polypeptide is Probable lipid kinase YegS-like (Shewanella frigidimarina (strain NCIMB 400)).